Consider the following 370-residue polypeptide: sn-glycerol-3-phosphate import ATP-binding protein UgpC (370 aa).

The ABC transporter domain maps to 4 to 235 (LRLDGIRKRY…PATRFVASFL (232 aa)). 37-44 (GPSGCGKS) contacts ATP.

It belongs to the ABC transporter superfamily. sn-glycerol-3-phosphate importer (TC 3.A.1.1.3) family. The complex is composed of two ATP-binding proteins (UgpC), two transmembrane proteins (UgpA and UgpE) and a solute-binding protein (UgpB).

The protein localises to the cell inner membrane. The enzyme catalyses sn-glycerol 3-phosphate(out) + ATP + H2O = sn-glycerol 3-phosphate(in) + ADP + phosphate + H(+). In terms of biological role, part of the ABC transporter complex UgpBAEC involved in sn-glycerol-3-phosphate (G3P) import. Responsible for energy coupling to the transport system. The chain is sn-glycerol-3-phosphate import ATP-binding protein UgpC from Chromohalobacter salexigens (strain ATCC BAA-138 / DSM 3043 / CIP 106854 / NCIMB 13768 / 1H11).